The following is a 99-amino-acid chain: MRQRDVAALDAKYTKELADAKAENDALRDDVAAGRRRLHIKAVCQSVREATTASGVDNAASPRLADTAERDYFTLRERLVMMQAQLEGAQQYITEQCLK.

In Escherichia coli (strain K12), this protein is Putative endopeptidase RzpR (rzpR).